Consider the following 336-residue polypeptide: MTLPILLGWFLTLCSSHIVRSCLQCDQVIRYVHEDFLSTVKGIRVRDQIELKKIIDHAYTNYRETSKLLSGVIDPTTLYRARTEYQSEFKRHWKEDRTNSLQWDLITIVEKGKRILQKHLEIFIAEGLCPNKCGLLYQRVMNCTSCQYGLFTCLSAKPPLDCGEHHLEADEGEEVVLDCFLSWHTLVVGQTEYHYSWHPGETNVLFDGEYEELVVTKESKIVLNQLSVSEEGSYRCLLKDQKGTALSRTFFQLEVKPFPSTSPRQVVTLPSLPLGYENTPYSLQKSSFLTVLILLTVLSITGSLIIIEYLRKSLKRQEEARGRDSRTAGDIELNTE.

Residues 1-16 form the signal peptide; sequence MTLPILLGWFLTLCSS. In terms of domain architecture, Ig-like C2-type spans 158–247; the sequence is PPLDCGEHHL…LKDQKGTALS (90 aa). A disulfide bridge connects residues Cys-179 and Cys-236. The helical transmembrane segment at 287-307 threads the bilayer; that stretch reads SFLTVLILLTVLSITGSLIII.

Belongs to the Izumo family. As to quaternary structure, forms a complex with tmem81 and spaca6 on spermatocyte cell membrane. The complex binds to oocyte protein bncr. As to expression, expressed in sperm.

The protein resides in the cell membrane. It localises to the cytoplasmic vesicle. The protein localises to the secretory vesicle. Its subcellular location is the acrosome membrane. Its function is as follows. Essential sperm cell-surface protein required for fertilization by acting as a ligand for bncr receptor on egg. The interaction of the complex izumo1:spaca6:tmemt81 with bncr is a necessary adhesion event between sperm and egg that is required for fertilization. The protein is Izumo sperm-egg fusion protein 1 of Danio rerio (Zebrafish).